Here is a 302-residue protein sequence, read N- to C-terminus: MEQKHLTHLQQLEAESIHILREVVAEFRNPVMMYSIGKDSSVMLHLARKAFYPGKLPFPLLHVDTGWKFREMYHFRDHTAKAYGFELLVHKNLEGQAMGINPFVHGSAKHTNIMKTESLKQAMNKYNFDAAFGGARRDEEKSRAKERIYSFRDRFHRWDPKNQRPELWHNYNGQINQGESIRVFPLSNWTEIEIWQYIFLENIDIVPLYFAKERPILERNGMLIMIDDDRIDLQFGETVGQRMVRFRTLGCWPLTGAVESTAQTLPDIIKEMLISATSERQGRVIDTDQSSSMEMKKRQGYF.

This sequence belongs to the PAPS reductase family. CysD subfamily. As to quaternary structure, heterodimer composed of CysD, the smaller subunit, and CysN.

It catalyses the reaction sulfate + ATP + H(+) = adenosine 5'-phosphosulfate + diphosphate. It functions in the pathway sulfur metabolism; hydrogen sulfide biosynthesis; sulfite from sulfate: step 1/3. In terms of biological role, with CysN forms the ATP sulfurylase (ATPS) that catalyzes the adenylation of sulfate producing adenosine 5'-phosphosulfate (APS) and diphosphate, the first enzymatic step in sulfur assimilation pathway. APS synthesis involves the formation of a high-energy phosphoric-sulfuric acid anhydride bond driven by GTP hydrolysis by CysN coupled to ATP hydrolysis by CysD. This is Sulfate adenylyltransferase subunit 2 from Baumannia cicadellinicola subsp. Homalodisca coagulata.